The primary structure comprises 275 residues: Large ribosomal subunit protein uL2 (275 aa).

Residues 223 to 275 (VAMNPVDHPHGGGEGRTSGGRHPVSPWGQPTKGYKTRSNKRTDKYIVRRRNKK) form a disordered region.

It belongs to the universal ribosomal protein uL2 family. In terms of assembly, part of the 50S ribosomal subunit. Forms a bridge to the 30S subunit in the 70S ribosome.

Its function is as follows. One of the primary rRNA binding proteins. Required for association of the 30S and 50S subunits to form the 70S ribosome, for tRNA binding and peptide bond formation. It has been suggested to have peptidyltransferase activity; this is somewhat controversial. Makes several contacts with the 16S rRNA in the 70S ribosome. In Shewanella piezotolerans (strain WP3 / JCM 13877), this protein is Large ribosomal subunit protein uL2.